The sequence spans 101 residues: Citrate lyase acyl carrier protein (101 aa).

An O-(phosphoribosyl dephospho-coenzyme A)serine modification is found at S14.

It belongs to the CitD family. In terms of assembly, oligomer with a subunit composition of (alpha,beta,gamma)6.

It localises to the cytoplasm. Its function is as follows. Covalent carrier of the coenzyme of citrate lyase. This chain is Citrate lyase acyl carrier protein, found in Clostridium perfringens (strain 13 / Type A).